The following is a 560-amino-acid chain: MIPTMTSAGWAPGVVQFREYQRRWLRGDVLAGLTVAAYLIPQAMAYATVAGLPPAAGLWASIAPLAIYALLGSSRQLSIGPESATALMTAAVLAPMAAGDLRRYAVLAATLGLLVGLICLLAGTARLGFLASLRSRPVLVGYMAGIALVMISSQLGTITGTSVEGNEFFSEVHSFATSVTRVHWPTFVLAMSVLALLTMLTRWAPRAPGPIIAVLAATMLVAVMSLDAKGIAIVGRIPSGLPTPGVPPVSVEDLRALIIPAAGIAIVTFTDGVLTARAFAARRGQEVNANAELRAVGACNIAAGLTHGFPVSSSSSRTALADVVGGRTQLYSLIALGLVVIVMVFASGLLAMFPIAALGALVVYAALRLIDLSEFRRLARFRRSELMLALATTAAVLGLGVFYGVLAAVALSILELLRRVAHPHDSVLGFVPGIAGMHDIDDYPQAKRVPGLVVYRYDAPLCFANAEDFRRRALTVVDQDPGQVEWFVLNAESNVEVDLTALDALDQLRTELLRRGIVFAMARVKQDLRESLRAASLLDKIGEDHIFMTLPTAVQAFRRR.

A required for sulfate transport in E.coli region spans residues 1–436 (MIPTMTSAGW…VLGFVPGIAG (436 aa)). 11 helical membrane passes run 29–49 (VLAGLTVAAYLIPQAMAYATV), 51–71 (GLPPAAGLWASIAPLAIYALL), 79–99 (IGPESATALMTAAVLAPMAAG), 105–125 (AVLAATLGLLVGLICLLAGTA), 138–158 (VLVGYMAGIALVMISSQLGTI), 184–204 (WPTFVLAMSVLALLTMLTRWA), 207–227 (APGPIIAVLAATMLVAVMSLD), 256–276 (ALIIPAAGIAIVTFTDGVLTA), 333–353 (LIALGLVVIVMVFASGLLAMF), 355–375 (IAALGALVVYAALRLIDLSEF), and 394–414 (AAVLGLGVFYGVLAAVALSIL). In terms of domain architecture, STAS spans 442–557 (DYPQAKRVPG…MTLPTAVQAF (116 aa)).

This sequence belongs to the SLC26A/SulP transporter (TC 2.A.53) family.

It is found in the cell membrane. Its function is as follows. Expression in E.coli induces sulfate uptake during early- to mid-log phase growth. Uptake is maximal at pH 6.0, is sulfate-specific, requires E.coli CysA and the transmembrane segment but not the STAS domain of the protein. This chain is Probable sulfate transporter Rv1739c, found in Mycobacterium tuberculosis (strain ATCC 25618 / H37Rv).